The chain runs to 263 residues: Undecaprenyl-diphosphatase (263 aa).

The next 7 membrane-spanning stretches (helical) occupy residues 38-58, 75-95, 108-128, 135-155, 181-201, 217-237, and 242-262; these read RSDFFNIVIQAGAILAICLAL, RDYVLKIGVAFLVTAVVGLIV, PVAWALLIGGVWMLVAEHFAG, VVTWKVAIAVGLAQVVAGVFP, FVFMVGIPTMFAASGYALLEM, VAFIAATLTGFVVVKWLLGYI, and FTVFAVYRILLGAALLLWLPA.

This sequence belongs to the UppP family.

It localises to the cell inner membrane. It catalyses the reaction di-trans,octa-cis-undecaprenyl diphosphate + H2O = di-trans,octa-cis-undecaprenyl phosphate + phosphate + H(+). Catalyzes the dephosphorylation of undecaprenyl diphosphate (UPP). Confers resistance to bacitracin. The chain is Undecaprenyl-diphosphatase from Xanthomonas campestris pv. campestris (strain 8004).